Consider the following 434-residue polypeptide: Enolase (434 aa).

Histidine 158 and glutamate 167 together coordinate substrate. The active-site Proton donor is glutamate 210. Aspartate 245, glutamate 294, and aspartate 319 together coordinate Mg(2+). The substrate site is built by glutamate 294 and aspartate 319. Residue lysine 344 is the Proton acceptor of the active site. Residues 371–374 (SHRS) and lysine 395 each bind substrate.

The protein belongs to the enolase family. In terms of assembly, homodimer. Mg(2+) serves as cofactor.

The protein resides in the cytoplasm. It carries out the reaction (2R)-2-phosphoglycerate = phosphoenolpyruvate + H2O. The protein operates within carbohydrate degradation; glycolysis; pyruvate from D-glyceraldehyde 3-phosphate: step 4/5. In Schistosoma mansoni (Blood fluke), this protein is Enolase (ENO).